Here is a 210-residue protein sequence, read N- to C-terminus: Phosphoheptose isomerase (210 aa).

In terms of domain architecture, SIS spans 38–202; sequence IAACLARGGK…ENVAALAPYL (165 aa). Residue 53-55 participates in substrate binding; sequence NGG. 2 residues coordinate Zn(2+): His62 and Glu66. Residues Glu66, 95–96, 121–123, Ser126, and Gln173 contribute to the substrate site; these read ND and STS. Residues Gln173 and His181 each contribute to the Zn(2+) site.

It belongs to the SIS family. GmhA subfamily. As to quaternary structure, homotetramer. Requires Zn(2+) as cofactor.

It is found in the cytoplasm. The enzyme catalyses 2 D-sedoheptulose 7-phosphate = D-glycero-alpha-D-manno-heptose 7-phosphate + D-glycero-beta-D-manno-heptose 7-phosphate. It participates in carbohydrate biosynthesis; D-glycero-D-manno-heptose 7-phosphate biosynthesis; D-glycero-alpha-D-manno-heptose 7-phosphate and D-glycero-beta-D-manno-heptose 7-phosphate from sedoheptulose 7-phosphate: step 1/1. Functionally, catalyzes the isomerization of sedoheptulose 7-phosphate in D-glycero-D-manno-heptose 7-phosphate. The protein is Phosphoheptose isomerase of Desulfovibrio desulfuricans (strain ATCC 27774 / DSM 6949 / MB).